Here is a 99-residue protein sequence, read N- to C-terminus: Large ribosomal subunit protein uL23 (99 aa).

The protein belongs to the universal ribosomal protein uL23 family. Part of the 50S ribosomal subunit. Contacts protein L29, and trigger factor when it is bound to the ribosome.

One of the early assembly proteins it binds 23S rRNA. One of the proteins that surrounds the polypeptide exit tunnel on the outside of the ribosome. Forms the main docking site for trigger factor binding to the ribosome. The chain is Large ribosomal subunit protein uL23 from Psychromonas ingrahamii (strain DSM 17664 / CCUG 51855 / 37).